Reading from the N-terminus, the 312-residue chain is Non-structural protein 12A (312 aa).

Residues 1-23 (MFKSGSGSLKRSGSISSVKSFSG) are compositionally biased toward low complexity. Disordered stretches follow at residues 1–37 (MFKSGSGSLKRSGSISSVKSFSGDSEKGLPPISRGSV), 63–97 (VPEKTKSEGNLKNKSSVITGNFESSGPTNAHYNQN), and 114–162 (KGRG…TGDG). A compositionally biased stretch (basic and acidic residues) spans 63-73 (VPEKTKSEGNL). Positions 74-97 (KNKSSVITGNFESSGPTNAHYNQN) are enriched in polar residues. Residues 122 to 134 (DARHTATDSRLSQ) show a composition bias toward basic and acidic residues.

Belongs to the phytoreovirus non-structural protein Pns12A family.

Its subcellular location is the host cytoplasm. Its function is as follows. Constituent of viral factories. The sequence is that of Non-structural protein 12A from Rice dwarf virus (isolate Fujian) (RDV).